Consider the following 356-residue polypeptide: Cyclin-A1-4 (356 aa).

It belongs to the cyclin family. Cyclin AB subfamily.

The chain is Cyclin-A1-4 (CYCA1-4) from Oryza sativa subsp. japonica (Rice).